The sequence spans 611 residues: Alpha-1,2-mannosyltransferase ALG9 (611 aa).

Residues 1-10 (MASRRARQRL) are compositionally biased toward basic residues. The segment at 1-51 (MASRRARQRLKGGGGGGGGGGDAGPAAEKLEQLGSREAGAEPRPESGNKAG) is disordered. Over 1 to 135 (MASRRARQRL…FHARILQTNK (135 aa)) the chain is Lumenal. Gly residues predominate over residues 11 to 23 (KGGGGGGGGGGDA). N-linked (GlcNAc...) asparagine glycosylation is present at asparagine 77. Residues 136 to 156 (ILVFYFLRCLLAFVSCVCELY) traverse the membrane as a helical segment. At 157 to 171 (FYKAVCKKFGLHVSR) the chain is on the cytoplasmic side. Residues 172–192 (MMLAFLVLSTGMFCSSSAFLP) form a helical membrane-spanning segment. At 193 to 213 (SSFCMYTTLIAMTGWYMDKTP) the chain is on the lumenal side. The helical transmembrane segment at 214 to 234 (IAVLGVAAGAILGWPFSAALG) threads the bilayer. Residues 235 to 249 (LPIAFDLLARKHRWK) lie on the Cytoplasmic side of the membrane. A helical transmembrane segment spans residues 250–270 (SFLLWSLVALALFLVPVVVID). The Lumenal portion of the chain corresponds to 271–310 (SYYYGKLVVAPLNIVLYNVFTSHGPDLYGTEPWYFYLING). Residues 311 to 331 (FLNFNVAFALALLVLPLTFLM) form a helical membrane-spanning segment. Residues 332-342 (EYLLQRFHVQN) are Cytoplasmic-facing. A helical membrane pass occupies residues 343-363 (LGHPYWLTLAPMYIWFIIFFI). The Lumenal segment spans residues 364–370 (QPHKEER). Residues 371 to 391 (FLFPVYPLICLCGAVALSALQ) traverse the membrane as a helical segment. The Cytoplasmic portion of the chain corresponds to 392–405 (KCYHFVFQRYRLEH). A helical transmembrane segment spans residues 406-426 (YTVTSNWLALGTVFLFGLLSF). Residues 427 to 611 (SRSVALFRGY…AKPSRKKSGG (185 aa)) lie on the Lumenal side of the membrane. 2 N-linked (GlcNAc...) asparagine glycosylation sites follow: asparagine 550 and asparagine 593.

It belongs to the glycosyltransferase 22 family.

It localises to the endoplasmic reticulum membrane. It carries out the reaction an alpha-D-Man-(1-&gt;2)-alpha-D-Man-(1-&gt;2)-alpha-D-Man-(1-&gt;3)-[alpha-D-Man-(1-&gt;3)-alpha-D-Man-(1-&gt;6)]-beta-D-Man-(1-&gt;4)-beta-D-GlcNAc-(1-&gt;4)-alpha-D-GlcNAc-diphospho-di-trans,poly-cis-dolichol + a di-trans,poly-cis-dolichyl beta-D-mannosyl phosphate = an alpha-D-Man-(1-&gt;2)-alpha-D-Man-(1-&gt;2)-alpha-D-Man-(1-&gt;3)-[alpha-D-Man-(1-&gt;2)-alpha-D-Man-(1-&gt;3)-alpha-D-Man-(1-&gt;6)]-beta-D-Man-(1-&gt;4)-beta-D-GlcNAc-(1-&gt;4)-alpha-D-GlcNAc-diphospho-di-trans,poly-cis-dolichol + a di-trans,poly-cis-dolichyl phosphate + H(+). It catalyses the reaction an alpha-D-Man-(1-&gt;2)-alpha-D-Man-(1-&gt;2)-alpha-D-Man-(1-&gt;3)-[alpha-D-Man-(1-&gt;2)-alpha-D-Man-(1-&gt;3)-[alpha-D-Man-(1-&gt;6)]-alpha-D-Man-(1-&gt;6)]-beta-D-Man-(1-&gt;4)-beta-D-GlcNAc-(1-&gt;4)-alpha-D-GlcNAc-diphospho-di-trans,poly-cis-dolichol + a di-trans,poly-cis-dolichyl beta-D-mannosyl phosphate = an alpha-D-Man-(1-&gt;2)-alpha-D-Man-(1-&gt;2)-alpha-D-Man-(1-&gt;3)-[alpha-D-Man-(1-&gt;2)-alpha-D-Man-(1-&gt;3)-[alpha-D-Man-(1-&gt;2)-alpha-D-Man-(1-&gt;6)]-alpha-D-Man-(1-&gt;6)]-beta-D-Man-(1-&gt;4)-beta-D-GlcNAc-(1-&gt;4)-alpha-D-GlcNAc-diphospho-di-trans,poly-cis-dolichol + a di-trans,poly-cis-dolichyl phosphate + H(+). It functions in the pathway protein modification; protein glycosylation. Its function is as follows. Mannosyltransferase that operates in the biosynthetic pathway of dolichol-linked oligosaccharides, the glycan precursors employed in protein asparagine (N)-glycosylation. The assembly of dolichol-linked oligosaccharides begins on the cytosolic side of the endoplasmic reticulum membrane and finishes in its lumen. The sequential addition of sugars to dolichol pyrophosphate produces dolichol-linked oligosaccharides containing fourteen sugars, including two GlcNAcs, nine mannoses and three glucoses. Once assembled, the oligosaccharide is transferred from the lipid to nascent proteins by oligosaccharyltransferases. In the lumen of the endoplasmic reticulum, catalyzes the addition of the seventh and ninth alpha-1,2-linked mannose residues to Man(6)GlcNAc(2)-PP-dolichol and Man(8)GlcNAc(2)-PP-dolichol respectively. The polypeptide is Alpha-1,2-mannosyltransferase ALG9 (Mus musculus (Mouse)).